We begin with the raw amino-acid sequence, 51 residues long: Large ribosomal subunit protein eL39 (51 aa).

This sequence belongs to the eukaryotic ribosomal protein eL39 family.

This is Large ribosomal subunit protein eL39 (RpL39) from Plutella xylostella (Diamondback moth).